Here is a 1248-residue protein sequence, read N- to C-terminus: MASHQYHQIANLLEKMTSTDKDFRFMATNDLMTELQKDSIILDDESEKKVVRMVLKLLEDKNGEVQNLAVKCLGPLVNKVKEIQVETIVDSLCANMMSNTEQLRDISSIGLKTVIAELPQSSNSLAPNVCQRITGKLSTAIEKEDVSVKLESLDILADLLSRFGEFLVPFHSTILKALMPQLASSRQAVRKRTIVALSFLLIQANSNAYNGVIDHLLDGLENPPNPAAIRTYIQCLASICRQAGHRLCNHIDRSMLLLSQYSQRDDDELREFCLQACEAFVMRCPDAINPHIPMILELCLNYITYDPNYNYETDDGDTGNAMDTEDDEYVDSEEYSDDDDMSWKVRRAAAKCLEVLISTRQELVEDFYRSLSPALIARFKEREENVKSDIFHAYVALLKNTRLTDDVANDHDSMDQVSGPTSLLIEQLPLIVKAIQPLMREKSMKTRQDCFLLLRELLNSLPGALGPYLDSIVPGISYSLNDKSSTSNMKIESLGFLYSLLQGHPPHVFHPHIPLLVPLVVTSVFDPFYKIATEALLVLQQLVKVIRPLEPNAAKSDFDAPSFVGQVYSCTLQKLKVTDVDQEVKERAIACMGQIIANMGDMLQNELAVCLPIFMERLKNEVTRLSSVKALTLIAASSLRIDLTPILHDVLPALGTFLRKNHRALKLHSLDLINKIVINYSSNFEANLLQTAIVEIPPLISDSDLHVAQYSLTLLSTVARRQPQALVGIHEQFLRSVLILVRSPLLQGSALNCTLELFQALVQTQLSGLDYHSLVSKLMAPVLGGNGDVKSRATAGAPSEVVQLHKQAYHSSAKCIAALTQQCPQVATPLATKLITDLQKRNDTEIIFCLLTIGEIGRHFDLSSIQVLPQTIIECFGATSEDVKAAASHALGAVSVGSLQTYLPLILHEIEVQPKRQYLLLHSLKEVISSLSVSPSGLAQLLPSVPSIWDQLFKHCECSEEGSRNVVAECLGKLVLVNPDELLPQLQQALRSESATMRTVVVSSVKFTISDQPQPIDVLLKQNIGEFLFALRDPEPQVRRVALVAFNSAVHNKPSLVRDLLPTLLPWLYSETKVKSELIREVEMGPFKHTVDDGLDIRKAAFECMYTLLEQGLDRVDVMQFLDHVQAGLCDHYDIKMLTYLMTARLAILCPDKVLLRLDQFIQQLRDTCTHKVKANSVKQEYEKQDELKRSALRAVSALSQIPKANKNQQLVDFLKSIKETPELNKIFEYIQKDSITGSSDIIVMDQS.

11 HEAT repeats span residues 44–82 (DESE…KVKE), 127–165 (PNVC…RFGE), 168–206 (VPFH…QANS), 365–403 (EDFY…NTRL), 425–463 (IEQL…SLPG), 510–548 (HPHI…VIRP), 604–642 (QNEL…LRID), 644–682 (TPIL…NYSS), 861–900 (DLSS…GSLQ), 976–1014 (LVNP…DQPQ), and 1054–1093 (PSLV…TVDD).

Belongs to the CAND family.

Its function is as follows. Key assembly factor of SCF (SKP1-CUL1-F-box protein) E3 ubiquitin ligase complexes that promotes the exchange of the substrate-recognition F-box subunit in SCF complexes, thereby playing a key role in the cellular repertoire of SCF complexes. Acts as a F-box protein exchange factor. Probably plays a similar role in other cullin-RING E3 ubiquitin ligase complexes. The chain is Cullin-associated NEDD8-dissociated protein 1 (Cand1) from Drosophila melanogaster (Fruit fly).